Here is an 822-residue protein sequence, read N- to C-terminus: Epidermal growth factor receptor kinase substrate 8 (822 aa).

Phosphoserine is present on serine 58. Residues 64–194 (QYRVEHLTTF…SDSKGGKQKR (131 aa)) enclose the PTB domain. Disordered stretches follow at residues 204–224 (KADP…PGTV), 295–320 (SELS…TLRA), and 460–487 (VANA…DYPP). Over residues 208-221 (GIPPPPRAPAPVPP) the composition is skewed to pro residues. Phosphothreonine is present on threonine 223. A compositionally biased stretch (basic residues) spans 299–309 (KRKKSKKSKRK). At threonine 317 the chain carries Phosphothreonine. Basic and acidic residues predominate over residues 466–477 (QQRKQDSKRQST). Position 476 is a phosphoserine (serine 476). Residues 531–590 (QPKKYAKSKYDFVARNSSELSVMKDDVLEILDDRKQWWKVRNASGDSGFVPNNILDIMRT) enclose the SH3 domain. A disordered region spans residues 608–685 (KQRTEYGPRS…KQLPVDRRKS (78 aa)). Residues 623-649 (APSPPPTPAPVPVPLPPSAPAPVPVPK) are compositionally biased toward pro residues. Serine 625 is modified (phosphoserine; by MAPK). At threonine 629 the chain carries Phosphothreonine; by MAPK. Positions 649–822 (KVPANVTRQN…VESFDEGSSH (174 aa)) are effector region. A phosphoserine mark is found at serine 659, serine 662, and serine 685. Over residues 671–685 (DSQRYKQLPVDRRKS) the composition is skewed to basic and acidic residues. Residues 680–698 (VDRRKSQMEEVQDELFQRL) form an amphipathic helix region. 4 helix bundle regions span residues 718–738 (VINI…QSKG), 752–757 (GAQLFS), 762–767 (ELRSVC), and 766–785 (VCPE…AALE). The tract at residues 787–822 (SSGSSELQEIMRRRQEKISAAASDSGVESFDEGSSH) is disordered. A phosphoserine mark is found at serine 811 and serine 815.

It belongs to the EPS8 family. In terms of assembly, homodimer. Part of a complex consisting of ABI1, EPS8 and SOS1. Interacts with BAIAP2. Interacts with SHB and LANCL1. Interacts with EGFR; mediates EPS8 phosphorylation. Interacts with MYO15A and WHRN. In terms of processing, ubiquitinated by the SCF(FBXW5) E3 ubiquitin-protein ligase complex during G2 phase, leading to its transient degradation and subsequent cell shape changes required to allow mitotic progression. Reappears at the midzone of dividing cells. Post-translationally, phosphorylation at Ser-625 and Thr-629 by MAPK following BDNF treatment promotes removal from actin and filopodia formation. Phosphorylated by several receptor tyrosine kinases. As to expression, expressed in neuronal cell body and neurites, and prominently enriched in the axonal growth cone.

The protein localises to the synapse. It is found in the synaptosome. It localises to the cytoplasm. Its subcellular location is the cell cortex. The protein resides in the cell projection. The protein localises to the ruffle membrane. It is found in the stereocilium. It localises to the growth cone. Signaling adapter that controls various cellular protrusions by regulating actin cytoskeleton dynamics and architecture. Depending on its association with other signal transducers, can regulate different processes. Together with SOS1 and ABI1, forms a trimeric complex that participates in transduction of signals from Ras to Rac by activating the Rac-specific guanine nucleotide exchange factor (GEF) activity. Acts as a direct regulator of actin dynamics by binding actin filaments and has both barbed-end actin filament capping and actin bundling activities depending on the context. Displays barbed-end actin capping activity when associated with ABI1, thereby regulating actin-based motility process: capping activity is auto-inhibited and inhibition is relieved upon ABI1 interaction. Also shows actin bundling activity when associated with BAIAP2, enhancing BAIAP2-dependent membrane extensions and promoting filopodial protrusions. Involved in the regulation of processes such as axonal filopodia growth, stereocilia length, dendritic cell migration and cancer cell migration and invasion. Acts as a regulator of axonal filopodia formation in neurons: in the absence of neurotrophic factors, negatively regulates axonal filopodia formation via actin-capping activity. In contrast, it is phosphorylated in the presence of BDNF leading to inhibition of its actin-capping activity and stimulation of filopodia formation. Component of a complex with WHRN and MYO15A that localizes at stereocilia tips and is required for elongation of the stereocilia actin core. Indirectly involved in cell cycle progression; its degradation following ubiquitination being required during G2 phase to promote cell shape changes. The chain is Epidermal growth factor receptor kinase substrate 8 (Eps8) from Rattus norvegicus (Rat).